The chain runs to 555 residues: Glutamine--tRNA ligase (555 aa).

The short motif at 34 to 44 (PEPNGYLHIGH) is the 'HIGH' region element. Residues 35–37 (EPN) and 41–47 (HIGHAKS) each bind ATP. L-glutamine is bound by residues Asp67 and Tyr212. ATP contacts are provided by residues Thr231, 261–262 (RL), and 269–271 (MSK). A 'KMSKS' region motif is present at residues 268 to 272 (VMSKR). Positions 317–324 (TKQDNTIE) are interaction with tRNA.

The protein belongs to the class-I aminoacyl-tRNA synthetase family. Monomer.

The protein localises to the cytoplasm. It catalyses the reaction tRNA(Gln) + L-glutamine + ATP = L-glutaminyl-tRNA(Gln) + AMP + diphosphate. In Salmonella agona (strain SL483), this protein is Glutamine--tRNA ligase.